Consider the following 479-residue polypeptide: Ribulose bisphosphate carboxylase large chain (479 aa).

Residues 1–2 (MS) constitute a propeptide that is removed on maturation. Residues asparagine 123 and threonine 173 each coordinate substrate. Lysine 175 (proton acceptor) is an active-site residue. Lysine 177 contacts substrate. Residues lysine 201, aspartate 203, and glutamate 204 each contribute to the Mg(2+) site. Residue lysine 201 is modified to N6-carboxylysine. Residue serine 208 is modified to Phosphoserine. The Proton acceptor role is filled by histidine 294. Residues arginine 295 and histidine 327 each coordinate substrate. Threonine 330 is subject to Phosphothreonine. Serine 379 serves as a coordination point for substrate.

It belongs to the RuBisCO large chain family. Type I subfamily. As to quaternary structure, heterohexadecamer of 8 large chains and 8 small chains; disulfide-linked. The disulfide link is formed within the large subunit homodimers. Mg(2+) is required as a cofactor. In terms of processing, the disulfide bond which can form in the large chain dimeric partners within the hexadecamer appears to be associated with oxidative stress and protein turnover.

It is found in the plastid. The protein localises to the chloroplast. It catalyses the reaction 2 (2R)-3-phosphoglycerate + 2 H(+) = D-ribulose 1,5-bisphosphate + CO2 + H2O. It carries out the reaction D-ribulose 1,5-bisphosphate + O2 = 2-phosphoglycolate + (2R)-3-phosphoglycerate + 2 H(+). In terms of biological role, ruBisCO catalyzes two reactions: the carboxylation of D-ribulose 1,5-bisphosphate, the primary event in carbon dioxide fixation, as well as the oxidative fragmentation of the pentose substrate in the photorespiration process. Both reactions occur simultaneously and in competition at the same active site. The chain is Ribulose bisphosphate carboxylase large chain from Nasturtium officinale (Watercress).